A 184-amino-acid chain; its full sequence is Photosystem I assembly protein Ycf4 (184 aa).

The next 2 helical transmembrane spans lie at 22-42 (FCWA…GTSS) and 57-77 (IIFF…LFIS).

The protein belongs to the Ycf4 family.

It is found in the plastid. The protein localises to the chloroplast thylakoid membrane. In terms of biological role, seems to be required for the assembly of the photosystem I complex. The polypeptide is Photosystem I assembly protein Ycf4 (Lobularia maritima (Sweet alyssum)).